A 358-amino-acid polypeptide reads, in one-letter code: MEADEAGQQVLAYGGDPPLATALLRCRPEDFQVVEELPFALSGEGEHVWLLLCKRNTNTVWLARQLARIAGVRLVDVGYAGLKDRHGLTTQWFSVNLSGKKEPAWATALESATVQVLKVIRHSRKLQRGALKGNRFLLTLRHFQGDREVVCDRLTQIKVAGTPNYFGPQRFGRGGQNLDQVHRWFSGGKPPRGRYLRGMLLSAARAFLFNRVLSERVQAANWWQPLPGEALILDGSHGFFVAETIDEALQARVRRFDCHPSGPLWGRGESPAKRMSRALEEEVLADYALWREGLEQAGLKQERRSLRLMVADLEWSFPPAMDSLQLHFRLPAGAYATTVLREVVRTQEAVGQPFLLDE.

The active-site Nucleophile is aspartate 84. One can recognise a TRUD domain in the interval glycine 161 to aspartate 312.

This sequence belongs to the pseudouridine synthase TruD family.

The catalysed reaction is uridine(13) in tRNA = pseudouridine(13) in tRNA. Functionally, responsible for synthesis of pseudouridine from uracil-13 in transfer RNAs. The sequence is that of tRNA pseudouridine synthase D from Nitrosococcus oceani (strain ATCC 19707 / BCRC 17464 / JCM 30415 / NCIMB 11848 / C-107).